We begin with the raw amino-acid sequence, 416 residues long: Protein MID1-COMPLEMENTING ACTIVITY 2 (416 aa).

The stretch at 191–219 forms a coiled coil; sequence CEALKTEEEKLQLELQRSRARYDADQCEV. A helical membrane pass occupies residues 338–354; the sequence is LIVYSLILSCCCYTCCI.

Expressed in roots, leaves, stems, flowers and siliques. In the root, high levels of expression in vascular tissues, in the stele and endodermis, but no expression in the cortex, epidermis, root cap, promeristem and adjacent elongation zone of the primary root. Not expressed in root hairs. Detected in shoot apical meristem, leaf mesophyll cells and vascular tissues, upper half of inflorescence, but not in petioles of rosette leaves.

The protein resides in the cell membrane. Its activity is regulated as follows. Inhibited by GdCl(3), but not by verapamil. Calcium-permeable stretch-activated channel component. Probably involved in mechanosensing and in mechano-stimulated calcium uptake mechanism. The protein is Protein MID1-COMPLEMENTING ACTIVITY 2 (MCA2) of Arabidopsis thaliana (Mouse-ear cress).